A 557-amino-acid chain; its full sequence is Dihydroxy-acid dehydratase (557 aa).

Cys49 is a [2Fe-2S] cluster binding site. Position 81 (Asp81) interacts with Mg(2+). Residue Cys122 participates in [2Fe-2S] cluster binding. Positions 123 and 124 each coordinate Mg(2+). At Lys124 the chain carries N6-carboxylysine. Residue Cys194 coordinates [2Fe-2S] cluster. Glu446 serves as a coordination point for Mg(2+). Ser472 serves as the catalytic Proton acceptor.

The protein belongs to the IlvD/Edd family. As to quaternary structure, homodimer. [2Fe-2S] cluster serves as cofactor. Requires Mg(2+) as cofactor.

It carries out the reaction (2R)-2,3-dihydroxy-3-methylbutanoate = 3-methyl-2-oxobutanoate + H2O. The catalysed reaction is (2R,3R)-2,3-dihydroxy-3-methylpentanoate = (S)-3-methyl-2-oxopentanoate + H2O. It functions in the pathway amino-acid biosynthesis; L-isoleucine biosynthesis; L-isoleucine from 2-oxobutanoate: step 3/4. The protein operates within amino-acid biosynthesis; L-valine biosynthesis; L-valine from pyruvate: step 3/4. Functions in the biosynthesis of branched-chain amino acids. Catalyzes the dehydration of (2R,3R)-2,3-dihydroxy-3-methylpentanoate (2,3-dihydroxy-3-methylvalerate) into 2-oxo-3-methylpentanoate (2-oxo-3-methylvalerate) and of (2R)-2,3-dihydroxy-3-methylbutanoate (2,3-dihydroxyisovalerate) into 2-oxo-3-methylbutanoate (2-oxoisovalerate), the penultimate precursor to L-isoleucine and L-valine, respectively. The polypeptide is Dihydroxy-acid dehydratase (Prochlorococcus marinus (strain MIT 9312)).